The following is a 453-amino-acid chain: tRNA(Ile)-lysidine synthase (453 aa).

An ATP-binding site is contributed by 27–32; it reads SGGSDS.

It belongs to the tRNA(Ile)-lysidine synthase family.

The protein localises to the cytoplasm. The catalysed reaction is cytidine(34) in tRNA(Ile2) + L-lysine + ATP = lysidine(34) in tRNA(Ile2) + AMP + diphosphate + H(+). Functionally, ligates lysine onto the cytidine present at position 34 of the AUA codon-specific tRNA(Ile) that contains the anticodon CAU, in an ATP-dependent manner. Cytidine is converted to lysidine, thus changing the amino acid specificity of the tRNA from methionine to isoleucine. This Rhizobium meliloti (strain 1021) (Ensifer meliloti) protein is tRNA(Ile)-lysidine synthase.